The sequence spans 733 residues: Acyl-coenzyme A oxidase (733 aa).

This sequence belongs to the acyl-CoA oxidase family. The cofactor is FAD.

The protein localises to the peroxisome. It catalyses the reaction a 2,3-saturated acyl-CoA + O2 = a (2E)-enoyl-CoA + H2O2. Its pathway is lipid metabolism; peroxisomal fatty acid beta-oxidation. The protein is Acyl-coenzyme A oxidase (POX1) of Eremothecium gossypii (strain ATCC 10895 / CBS 109.51 / FGSC 9923 / NRRL Y-1056) (Yeast).